A 164-amino-acid polypeptide reads, in one-letter code: Peptidyl-prolyl cis-trans isomerase A-like 4D (164 aa).

The PPIase cyclophilin-type domain occupies 7–163 (FFEITRDGKP…KKITIADCGQ (157 aa)).

The protein belongs to the cyclophilin-type PPIase family. PPIase A subfamily.

It is found in the cytoplasm. It carries out the reaction [protein]-peptidylproline (omega=180) = [protein]-peptidylproline (omega=0). Its function is as follows. PPIases accelerate the folding of proteins. It catalyzes the cis-trans isomerization of proline imidic peptide bonds in oligopeptides. This is Peptidyl-prolyl cis-trans isomerase A-like 4D from Homo sapiens (Human).